A 477-amino-acid polypeptide reads, in one-letter code: ATP-dependent rRNA helicase RRP3 (477 aa).

A disordered region spans residues 1–22 (MSVKVDGMINKKSKTHSKKLDA). A Q motif motif is present at residues 65–93 (KSFNELKLIPELLEAIQQMKFTKPTPIQS). A Helicase ATP-binding domain is found at 96–267 (IPHALEGKDI…RASLHNPVRV (172 aa)). Residue 109–116 (AQTGSGKT) participates in ATP binding. Residues 215–218 (DEAD) carry the DEAD box motif. Residues 294–438 (YLIHLLNEFL…KDPSPSKAVL (145 aa)) enclose the Helicase C-terminal domain. The disordered stretch occupies residues 452–477 (AIRQTKDFHEKRNPKKNRDDRDREER).

The protein belongs to the DEAD box helicase family. DDX47/RRP3 subfamily. In terms of assembly, interacts with the SSU processome.

It is found in the nucleus. It carries out the reaction ATP + H2O = ADP + phosphate + H(+). Its function is as follows. ATP-dependent rRNA helicase required for pre-ribosomal RNA processing. Involved in the maturation of the 35S-pre-rRNA and to its cleavage to mature 18S rRNA. This is ATP-dependent rRNA helicase RRP3 from Debaryomyces hansenii (strain ATCC 36239 / CBS 767 / BCRC 21394 / JCM 1990 / NBRC 0083 / IGC 2968) (Yeast).